We begin with the raw amino-acid sequence, 96 residues long: Small ribosomal subunit protein uS17 (96 aa).

This sequence belongs to the universal ribosomal protein uS17 family. Part of the 30S ribosomal subunit.

In terms of biological role, one of the primary rRNA binding proteins, it binds specifically to the 5'-end of 16S ribosomal RNA. In Deinococcus radiodurans (strain ATCC 13939 / DSM 20539 / JCM 16871 / CCUG 27074 / LMG 4051 / NBRC 15346 / NCIMB 9279 / VKM B-1422 / R1), this protein is Small ribosomal subunit protein uS17.